The following is a 613-amino-acid chain: Thioredoxin reductase 1, cytoplasmic (613 aa).

The segment at 58–121 (AVLPASRPSK…LPTMNGSKDP (64 aa)) is disordered. Positions 65–74 (PSKTLPSSSQ) are enriched in polar residues. FAD contacts are provided by residues 136 to 137 (SG), 156 to 157 (DF), 172 to 173 (TC), and 177 to 181 (GCIPK). A disulfide bridge connects residues C173 and C178. The residue at position 182 (K182) is an N6-succinyllysine. Y245 carries the phosphotyrosine modification. FAD is bound by residues 245–246 (YG) and T275. NADP(+)-binding positions include R280, 312–318 (ASYVALE), 335–336 (RS), R340, 340–342 (RGF), 406–407 (GR), and K429. Residue Y314 coordinates FAD. Residues D448, 455-457 (ELT), and H586 contribute to the FAD site. E455 is an NADP(+) binding site. Residue H586 is the Proton acceptor of the active site. The segment at residues 611–612 (CU) is a cross-link (cysteinyl-selenocysteine (Cys-Sec)). Position 612 (U612) is a non-standard amino acid, selenocysteine.

This sequence belongs to the class-I pyridine nucleotide-disulfide oxidoreductase family. As to quaternary structure, homodimer. It depends on FAD as a cofactor. In terms of processing, ISGylated.

The protein localises to the cytoplasm. The enzyme catalyses [thioredoxin]-dithiol + NADP(+) = [thioredoxin]-disulfide + NADPH + H(+). It catalyses the reaction H2O2 + NADPH + H(+) = NADP(+) + 2 H2O. Its function is as follows. Reduces disulfideprotein thioredoxin (Trx) to its dithiol-containing form. Homodimeric flavoprotein involved in the regulation of cellular redox reactions, growth and differentiation. Contains a selenocysteine residue at the C-terminal active site that is essential for catalysis. Also has reductase activity on hydrogen peroxide (H2O2). The chain is Thioredoxin reductase 1, cytoplasmic from Mus musculus (Mouse).